The primary structure comprises 667 residues: Tripartite terminase subunit 3 (667 aa).

Positions 208–215 (VPRRHGKT) match the Walker A motif motif. The Walker B motif signature appears at 301–306 (LLIVDE). Glutamate 306 acts as the For ATPase activity in catalysis. Catalysis depends on for nuclease activity residues aspartate 459, glutamate 530, and aspartate 644.

Belongs to the herpesviridae TRM3 protein family. As to quaternary structure, interacts with the terminase subunits TRM1 and TRM2. Interacts with portal protein.

It localises to the host nucleus. Component of the molecular motor that translocates viral genomic DNA in empty capsid during DNA packaging. Forms a tripartite terminase complex together with TRM1 and TRM2 in the host cytoplasm. Once the complex reaches the host nucleus, it interacts with the capsid portal vertex. This portal forms a ring in which genomic DNA is translocated into the capsid. TRM3 carries an RNase H-like nuclease activity that plays an important role for the cleavage of concatemeric viral DNA into unit length genomes. The chain is Tripartite terminase subunit 3 from Human herpesvirus 6A (strain Uganda-1102) (HHV-6 variant A).